Reading from the N-terminus, the 160-residue chain is uncharacterized protein (160 aa).

Residues 1 to 33 (MPLRPCRHHQGFLPKKQWRAKFPQLIVLMGRVA) are Extracellular-facing. A helical membrane pass occupies residues 34–54 (AEELLPAVAVAAVVVAVVVAV). Over 55–68 (ERVVPLLFVHRPDS) the chain is Cytoplasmic. The chain crosses the membrane as a helical span at residues 69–89 (FFLIFFFQSCFVCCCCCCSCS). Residues 90–119 (TSLKAYSSEKEKQKYGKRGNGNTPLVQRLV) are Extracellular-facing. A helical membrane pass occupies residues 120–140 (TLSYLALLILVLSIELLTWFV). Residues 141-160 (KKQRTGNKKQKDKEKNALLL) lie on the Cytoplasmic side of the membrane.

The protein resides in the membrane. This is an uncharacterized protein from Saccharomyces cerevisiae (strain ATCC 204508 / S288c) (Baker's yeast).